The sequence spans 419 residues: Synaptic vesicle membrane protein VAT-1 homolog-like (419 aa).

Positions 1–25 (MAKEGVEKAEETEQMIEKEAGKEPA) are enriched in basic and acidic residues. 2 disordered regions span residues 1 to 36 (MAKE…SHRL) and 384 to 419 (PTPL…PFIQ). The residue at position 392 (Ser392) is a Phosphoserine. Thr393 and Thr395 each carry phosphothreonine. Ser396 carries the phosphoserine modification. Positions 397-407 (EAGEEEEDHEG) are enriched in acidic residues. Residues 408 to 419 (DSENKERMPFIQ) are compositionally biased toward basic and acidic residues.

Belongs to the zinc-containing alcohol dehydrogenase family. Quinone oxidoreductase subfamily. Detected in skin fibroblasts.

This chain is Synaptic vesicle membrane protein VAT-1 homolog-like (VAT1L), found in Homo sapiens (Human).